Reading from the N-terminus, the 201-residue chain is Ependymin-related protein 2 (201 aa).

A signal peptide spans 1–21; that stretch reads MILQVVLLLACLSGAIVSTGA. N-linked (GlcNAc...) asparagine glycans are attached at residues Asn-38 and Asn-137. A Microbody targeting signal motif is present at residues 199–201; that stretch reads CRA.

This sequence belongs to the ependymin family. Component of the acid-soluble and acid-insoluble organic matrix of calcified shell layers (at protein level).

It is found in the secreted. The sequence is that of Ependymin-related protein 2 from Haliotis asinina (Donkey's ear abalone).